Consider the following 727-residue polypeptide: Calpain-like protease 1 (727 aa).

The Calpain catalytic domain occupies 70–317; that stretch reads SRFYPPIPIS…FKQLYLNWNQ (248 aa). Residues C128, H271, and N296 contribute to the active site.

The protein belongs to the peptidase C2 family. PalB/RIM13 subfamily. In terms of assembly, interacts with SNF7, which may act together with RIM20 as a scaffold to recruit RIM13 to its substrate RIM101.

Required for the proteolytic cleavage of the transcriptional repressor RIM101 in response to alkaline ambient pH, which is necessary for sporulation and invasive growth. Probably the protease that cleaves RIM101. In Saccharomyces cerevisiae (strain ATCC 204508 / S288c) (Baker's yeast), this protein is Calpain-like protease 1 (RIM13).